Here is a 247-residue protein sequence, read N- to C-terminus: Segregation and condensation protein A (247 aa).

It belongs to the ScpA family. As to quaternary structure, component of a cohesin-like complex composed of ScpA, ScpB and the Smc homodimer, in which ScpA and ScpB bind to the head domain of Smc. The presence of the three proteins is required for the association of the complex with DNA.

The protein resides in the cytoplasm. Participates in chromosomal partition during cell division. May act via the formation of a condensin-like complex containing Smc and ScpB that pull DNA away from mid-cell into both cell halves. The protein is Segregation and condensation protein A of Mycoplasma mobile (strain ATCC 43663 / 163K / NCTC 11711) (Mesomycoplasma mobile).